Reading from the N-terminus, the 197-residue chain is Imidazoleglycerol-phosphate dehydratase (197 aa).

It belongs to the imidazoleglycerol-phosphate dehydratase family.

Its subcellular location is the cytoplasm. The enzyme catalyses D-erythro-1-(imidazol-4-yl)glycerol 3-phosphate = 3-(imidazol-4-yl)-2-oxopropyl phosphate + H2O. It participates in amino-acid biosynthesis; L-histidine biosynthesis; L-histidine from 5-phospho-alpha-D-ribose 1-diphosphate: step 6/9. This Erythrobacter litoralis (strain HTCC2594) protein is Imidazoleglycerol-phosphate dehydratase.